Reading from the N-terminus, the 448-residue chain is MLDYMDYVQRQFEKSTDWNYDNSYANILASSRNILDFPVPNQFKFQLSNNSTPHTFNTMEVFSRKIFNGSMTYLYTDAENMDKLVHDSNSISLQDVTDTYRYVQPYYTHKPSSNGDNHVRSLYYGKMSYPSPNLEAMLIKRLNESTQLTLQCVSSFNGFNILTGYWQHDTGRNRHEVIMSTNDLLCGYRYLHNFLGTPSKLKTSLYNNFSLSLGGEVWLGIVTLSPGCSTTLRYCTHSPTTGRPQTLTLTWNPLFGHISSTYTAKTSSSSTFSTKYDFNLYSIESNLSFGCEFWRRGYQESSPQLQEQINGHASEPKDRIMYYHMMAPDSRNSISPRANSPQERQLLEDLTIAFSSSLKKIDKEKSMIEQFENRINQSNFTSVWKLSTSSKDKNLRLLWEGKFKGFLLSAGTEFCKTNPRNEINEVPSTENKLTFYPNKFGIQLQYST.

The protein belongs to the MDM10 family. In terms of assembly, component of the ER-mitochondria encounter structure (ERMES) or MDM complex, composed of MMM1, MDM10, MDM12 and MDM34. Associates with the mitochondrial outer membrane sorting assembly machinery SAM(core) complex.

It localises to the mitochondrion outer membrane. Its function is as follows. Component of the ERMES/MDM complex, which serves as a molecular tether to connect the endoplasmic reticulum and mitochondria. Components of this complex are involved in the control of mitochondrial shape and protein biogenesis and may function in phospholipid exchange. MDM10 is involved in the late assembly steps of the general translocase of the mitochondrial outer membrane (TOM complex). Functions in the TOM40-specific route of the assembly of outer membrane beta-barrel proteins, including the association of TOM40 with the receptor TOM22 and small TOM proteins. Can associate with the SAM(core) complex as well as the MDM12-MMM1 complex, both involved in late steps of the major beta-barrel assembly pathway, that is responsible for biogenesis of all outer membrane beta-barrel proteins. May act as a switch that shuttles between both complexes and channels precursor proteins into the TOM40-specific pathway. Plays a role in mitochondrial morphology and in the inheritance of mitochondria. This is Mitochondrial distribution and morphology protein 10 from Zygosaccharomyces rouxii (strain ATCC 2623 / CBS 732 / NBRC 1130 / NCYC 568 / NRRL Y-229).